Here is a 622-residue protein sequence, read N- to C-terminus: Probable potassium transport system protein Kup 1 (622 aa).

12 helical membrane passes run 11–31 (LTLGAIGVVYGDIGTSVLYAV), 50–70 (ILSIFFWTLTIIVSLKYVTLV), 101–121 (VLLLVGIFGTCLFYGDGVITP), 137–157 (PAFNKFVIPLTLLVLFGLFWV), 168–188 (FFGPITVVWFACIAVLGVAQI), 215–235 (FIILGAVVLCVTGAEALYADL), 247–267 (WFAVVMPALTLNYFGQGALLL), 285–305 (ALLPLVGLATLATVIASQALI), 337–357 (IYLPFVNWGLFVTIVLAVMIF), 366–386 (AYGIAVCTDMLITTILTFFVI), 393–413 (PLWLCVAATSFFFVVDFAFWA), and 419–439 (LFDGGWFPLLIGGAIFILMIT).

The protein belongs to the HAK/KUP transporter (TC 2.A.72) family.

Its subcellular location is the cell inner membrane. It carries out the reaction K(+)(in) + H(+)(in) = K(+)(out) + H(+)(out). Functionally, transport of potassium into the cell. Likely operates as a K(+):H(+) symporter. The sequence is that of Probable potassium transport system protein Kup 1 from Albidiferax ferrireducens (strain ATCC BAA-621 / DSM 15236 / T118) (Rhodoferax ferrireducens).